Consider the following 298-residue polypeptide: Ribosomal protein L11 methyltransferase (298 aa).

Residues Thr-152, Gly-176, Asp-198, and Asn-236 each contribute to the S-adenosyl-L-methionine site.

The protein belongs to the methyltransferase superfamily. PrmA family.

Its subcellular location is the cytoplasm. It catalyses the reaction L-lysyl-[protein] + 3 S-adenosyl-L-methionine = N(6),N(6),N(6)-trimethyl-L-lysyl-[protein] + 3 S-adenosyl-L-homocysteine + 3 H(+). Methylates ribosomal protein L11. This is Ribosomal protein L11 methyltransferase from Polaromonas sp. (strain JS666 / ATCC BAA-500).